Reading from the N-terminus, the 495-residue chain is Glutamate--tRNA ligase (495 aa).

Residues 12–22 (PSPTGHLHIGN) carry the 'HIGH' region motif. Positions 259 to 263 (KLSKR) match the 'KMSKS' region motif. Lys262 contributes to the ATP binding site.

This sequence belongs to the class-I aminoacyl-tRNA synthetase family. Glutamate--tRNA ligase type 1 subfamily. Monomer.

It is found in the cytoplasm. It catalyses the reaction tRNA(Glu) + L-glutamate + ATP = L-glutamyl-tRNA(Glu) + AMP + diphosphate. Catalyzes the attachment of glutamate to tRNA(Glu) in a two-step reaction: glutamate is first activated by ATP to form Glu-AMP and then transferred to the acceptor end of tRNA(Glu). The chain is Glutamate--tRNA ligase from Pediococcus pentosaceus (strain ATCC 25745 / CCUG 21536 / LMG 10740 / 183-1w).